We begin with the raw amino-acid sequence, 236 residues long: Probable transcriptional regulatory protein FP0835 (236 aa).

Belongs to the TACO1 family.

Its subcellular location is the cytoplasm. The protein is Probable transcriptional regulatory protein FP0835 of Flavobacterium psychrophilum (strain ATCC 49511 / DSM 21280 / CIP 103535 / JIP02/86).